Here is an 87-residue protein sequence, read N- to C-terminus: UPF0250 protein CKO_02527 (87 aa).

This sequence belongs to the UPF0250 family.

The protein is UPF0250 protein CKO_02527 of Citrobacter koseri (strain ATCC BAA-895 / CDC 4225-83 / SGSC4696).